The sequence spans 126 residues: Profilin (126 aa).

This sequence belongs to the profilin family. In terms of assembly, occurs in many kinds of cells as a complex with monomeric actin in a 1:1 ratio. In terms of tissue distribution, expressed in ovary and head.

The protein localises to the cytoplasm. It is found in the cytoskeleton. Functionally, binds to actin and affects the structure of the cytoskeleton. At high concentrations, profilin prevents the polymerization of actin, whereas it enhances it at low concentrations. By binding to PIP2, it may inhibit the formation of IP3 and DG. This profilin is required for intercellular cytoplasm transport during Drosophila oogenesis. Function in neurons is essential for adult survival, and is important for climbing behavior and activity. The protein is Profilin (chic) of Drosophila melanogaster (Fruit fly).